Here is a 150-residue protein sequence, read N- to C-terminus: Regulatory protein RecX (150 aa).

It belongs to the RecX family.

The protein localises to the cytoplasm. Functionally, modulates RecA activity. This is Regulatory protein RecX from Acidithiobacillus ferrooxidans (strain ATCC 23270 / DSM 14882 / CIP 104768 / NCIMB 8455) (Ferrobacillus ferrooxidans (strain ATCC 23270)).